The sequence spans 540 residues: Intestinal-type alkaline phosphatase 1 (540 aa).

The signal sequence occupies residues 1–20 (MQGDWVLLLLLGLRIHLSFG). Aspartate 62 lines the Mg(2+) pocket. Zn(2+)-binding residues include aspartate 62 and serine 112. Serine 112 serves as the catalytic Phosphoserine intermediate. A disulfide bond links cysteine 141 and cysteine 203. An N-linked (GlcNAc...) asparagine glycan is attached at asparagine 142. Serine 175 is a binding site for Mg(2+). Residues glutamate 236, phenylalanine 289, and glutamate 290 each contribute to the Ca(2+) site. Residue asparagine 301 is glycosylated (N-linked (GlcNAc...) asparagine). Position 305 (aspartate 305) interacts with Ca(2+). Glutamate 331 contacts Mg(2+). Zn(2+) contacts are provided by aspartate 336, histidine 340, aspartate 377, and histidine 378. An N-linked (GlcNAc...) asparagine glycan is attached at asparagine 428. Histidine 452 lines the Zn(2+) pocket. A disulfide bridge links cysteine 487 with cysteine 494. Residue asparagine 511 is the site of GPI-anchor amidated asparagine attachment. Residues 512-540 (SAITMNNVLLSLQLLVSMLLLVGTALVVS) constitute a propeptide, removed in mature form.

The protein belongs to the alkaline phosphatase family. Homodimer. Mg(2+) is required as a cofactor. It depends on Zn(2+) as a cofactor. Requires Ca(2+) as cofactor.

The protein localises to the cell membrane. It carries out the reaction a phosphate monoester + H2O = an alcohol + phosphate. Alkaline phosphatase that can hydrolyze various phosphate compounds. The protein is Intestinal-type alkaline phosphatase 1 (Alpi) of Rattus norvegicus (Rat).